Reading from the N-terminus, the 204-residue chain is Guanylate kinase (204 aa).

The region spanning 4–182 (GLLYVISAPS…ALNQLRAIVQ (179 aa)) is the Guanylate kinase-like domain. 11–18 (APSGAGKT) is an ATP binding site.

It belongs to the guanylate kinase family.

Its subcellular location is the cytoplasm. It catalyses the reaction GMP + ATP = GDP + ADP. Essential for recycling GMP and indirectly, cGMP. The polypeptide is Guanylate kinase (Methylococcus capsulatus (strain ATCC 33009 / NCIMB 11132 / Bath)).